We begin with the raw amino-acid sequence, 274 residues long: 4-hydroxy-3-methylbut-2-enyl diphosphate reductase (274 aa).

C12 contributes to the [4Fe-4S] cluster binding site. The (2E)-4-hydroxy-3-methylbut-2-enyl diphosphate site is built by H36 and H70. Residues H36 and H70 each coordinate dimethylallyl diphosphate. Positions 36 and 70 each coordinate isopentenyl diphosphate. C92 is a [4Fe-4S] cluster binding site. Residue H120 participates in (2E)-4-hydroxy-3-methylbut-2-enyl diphosphate binding. H120 is a dimethylallyl diphosphate binding site. H120 contributes to the isopentenyl diphosphate binding site. E122 (proton donor) is an active-site residue. A (2E)-4-hydroxy-3-methylbut-2-enyl diphosphate-binding site is contributed by T158. C186 contributes to the [4Fe-4S] cluster binding site. (2E)-4-hydroxy-3-methylbut-2-enyl diphosphate contacts are provided by S214, S215, N216, and S258. Dimethylallyl diphosphate contacts are provided by S214, S215, N216, and S258. Residues S214, S215, N216, and S258 each contribute to the isopentenyl diphosphate site.

It belongs to the IspH family. Requires [4Fe-4S] cluster as cofactor.

The catalysed reaction is isopentenyl diphosphate + 2 oxidized [2Fe-2S]-[ferredoxin] + H2O = (2E)-4-hydroxy-3-methylbut-2-enyl diphosphate + 2 reduced [2Fe-2S]-[ferredoxin] + 2 H(+). It carries out the reaction dimethylallyl diphosphate + 2 oxidized [2Fe-2S]-[ferredoxin] + H2O = (2E)-4-hydroxy-3-methylbut-2-enyl diphosphate + 2 reduced [2Fe-2S]-[ferredoxin] + 2 H(+). Its pathway is isoprenoid biosynthesis; dimethylallyl diphosphate biosynthesis; dimethylallyl diphosphate from (2E)-4-hydroxy-3-methylbutenyl diphosphate: step 1/1. It participates in isoprenoid biosynthesis; isopentenyl diphosphate biosynthesis via DXP pathway; isopentenyl diphosphate from 1-deoxy-D-xylulose 5-phosphate: step 6/6. Catalyzes the conversion of 1-hydroxy-2-methyl-2-(E)-butenyl 4-diphosphate (HMBPP) into a mixture of isopentenyl diphosphate (IPP) and dimethylallyl diphosphate (DMAPP). Acts in the terminal step of the DOXP/MEP pathway for isoprenoid precursor biosynthesis. The chain is 4-hydroxy-3-methylbut-2-enyl diphosphate reductase from Helicobacter pylori (strain P12).